The following is a 188-amino-acid chain: dCTP deaminase (188 aa).

Residues 111–116, 135–137, glutamine 156, tyrosine 170, and glutamine 180 contribute to the dCTP site; these read KSTYAR and TLE. Glutamate 137 functions as the Proton donor/acceptor in the catalytic mechanism.

Belongs to the dCTP deaminase family. As to quaternary structure, homotrimer.

It carries out the reaction dCTP + H2O + H(+) = dUTP + NH4(+). The protein operates within pyrimidine metabolism; dUMP biosynthesis; dUMP from dCTP (dUTP route): step 1/2. In terms of biological role, catalyzes the deamination of dCTP to dUTP. The chain is dCTP deaminase from Cupriavidus metallidurans (strain ATCC 43123 / DSM 2839 / NBRC 102507 / CH34) (Ralstonia metallidurans).